A 1406-amino-acid polypeptide reads, in one-letter code: DNA-directed RNA polymerase subunit beta' (1406 aa).

Zn(2+) is bound by residues C70, C72, C85, and C88. Residues D460, D462, and D464 each coordinate Mg(2+). The Zn(2+) site is built by C814, C888, C895, and C898.

Belongs to the RNA polymerase beta' chain family. The RNAP catalytic core consists of 2 alpha, 1 beta, 1 beta' and 1 omega subunit. When a sigma factor is associated with the core the holoenzyme is formed, which can initiate transcription. Mg(2+) is required as a cofactor. It depends on Zn(2+) as a cofactor.

It carries out the reaction RNA(n) + a ribonucleoside 5'-triphosphate = RNA(n+1) + diphosphate. Functionally, DNA-dependent RNA polymerase catalyzes the transcription of DNA into RNA using the four ribonucleoside triphosphates as substrates. This Sodalis glossinidius (strain morsitans) protein is DNA-directed RNA polymerase subunit beta'.